Reading from the N-terminus, the 161-residue chain is Assembly protein P7 (161 aa).

In terms of assembly, homodimer. Part of the packaging complex composed of RDRP, P4 and P7. Interacts with RDRP.

It is found in the virion. Functionally, assembly protein part of the packaging complex that packages the viral RNA segments, replicate them into a double-stranded form and transcribe them. Required for efficient procapsid assembly. Necessary for stable packaging. May stabilize the RNA-dependent RNA polymerase (RdRP) in its position at the three-fold axis on the inner side of empty-unexpanded procapsids. Could play a role in viral RNA recognition. Seems to be involved in the regulation of plus strand synthesis (transcription) as a fidelity factor. The protein is Assembly protein P7 (P7) of Pseudomonas phage phi6 (Bacteriophage phi-6).